Consider the following 594-residue polypeptide: Trehalase (594 aa).

The first 27 residues, M1–S27, serve as a signal peptide directing secretion. N56, N70, N97, and N166 each carry an N-linked (GlcNAc...) asparagine glycan. Residues R190, W197–D198, and N234 contribute to the substrate site. N242 is a glycosylation site (N-linked (GlcNAc...) asparagine). Residue R243–Q245 participates in substrate binding. 2 N-linked (GlcNAc...) asparagine glycosylation sites follow: N261 and N305. Substrate is bound by residues R312 to E314 and G346. D348 acts as the Proton donor/acceptor in catalysis. Residues N361, N395, N513, and N537 are each glycosylated (N-linked (GlcNAc...) asparagine). E549 serves as the catalytic Proton donor/acceptor. E564 provides a ligand contact to substrate.

The protein belongs to the glycosyl hydrolase 37 family.

It catalyses the reaction alpha,alpha-trehalose + H2O = alpha-D-glucose + beta-D-glucose. The sequence is that of Trehalase (treh) from Dictyostelium discoideum (Social amoeba).